We begin with the raw amino-acid sequence, 343 residues long: Aspartate carbamoyltransferase catalytic subunit (343 aa).

The carbamoyl phosphate site is built by Arg-91 and Thr-92. Position 119 (Lys-119) interacts with L-aspartate. 3 residues coordinate carbamoyl phosphate: Arg-141, His-171, and Gln-174. 2 residues coordinate L-aspartate: Arg-204 and Arg-259. 2 residues coordinate carbamoyl phosphate: Gly-300 and Pro-301.

This sequence belongs to the aspartate/ornithine carbamoyltransferase superfamily. ATCase family. As to quaternary structure, heterododecamer (2C3:3R2) of six catalytic PyrB chains organized as two trimers (C3), and six regulatory PyrI chains organized as three dimers (R2).

It carries out the reaction carbamoyl phosphate + L-aspartate = N-carbamoyl-L-aspartate + phosphate + H(+). It functions in the pathway pyrimidine metabolism; UMP biosynthesis via de novo pathway; (S)-dihydroorotate from bicarbonate: step 2/3. Functionally, catalyzes the condensation of carbamoyl phosphate and aspartate to form carbamoyl aspartate and inorganic phosphate, the committed step in the de novo pyrimidine nucleotide biosynthesis pathway. This is Aspartate carbamoyltransferase catalytic subunit from Burkholderia vietnamiensis (strain G4 / LMG 22486) (Burkholderia cepacia (strain R1808)).